Here is a 468-residue protein sequence, read N- to C-terminus: Siroheme synthase (468 aa).

Residues 1-203 form a precorrin-2 dehydrogenase /sirohydrochlorin ferrochelatase region; that stretch reads MQYLPIFLNI…GQEEEAEGAL (203 aa). NAD(+)-binding positions include 22–23 and 43–44; these read TV and PK. Ser-128 is subject to Phosphoserine. Residues 216–468 form a uroporphyrinogen-III C-methyltransferase region; sequence GEVYLVGAGP…VPDREPLDAR (253 aa). Pro-225 is a binding site for S-adenosyl-L-methionine. Asp-248 serves as the catalytic Proton acceptor. Lys-270 serves as the catalytic Proton donor. S-adenosyl-L-methionine contacts are provided by residues 301–303, Ile-306, 331–332, Met-383, and Gly-412; these read GGD and TA.

This sequence in the N-terminal section; belongs to the precorrin-2 dehydrogenase / sirohydrochlorin ferrochelatase family. It in the C-terminal section; belongs to the precorrin methyltransferase family.

It carries out the reaction uroporphyrinogen III + 2 S-adenosyl-L-methionine = precorrin-2 + 2 S-adenosyl-L-homocysteine + H(+). It catalyses the reaction precorrin-2 + NAD(+) = sirohydrochlorin + NADH + 2 H(+). The catalysed reaction is siroheme + 2 H(+) = sirohydrochlorin + Fe(2+). The protein operates within cofactor biosynthesis; adenosylcobalamin biosynthesis; precorrin-2 from uroporphyrinogen III: step 1/1. Its pathway is cofactor biosynthesis; adenosylcobalamin biosynthesis; sirohydrochlorin from precorrin-2: step 1/1. It functions in the pathway porphyrin-containing compound metabolism; siroheme biosynthesis; precorrin-2 from uroporphyrinogen III: step 1/1. It participates in porphyrin-containing compound metabolism; siroheme biosynthesis; siroheme from sirohydrochlorin: step 1/1. The protein operates within porphyrin-containing compound metabolism; siroheme biosynthesis; sirohydrochlorin from precorrin-2: step 1/1. Its function is as follows. Multifunctional enzyme that catalyzes the SAM-dependent methylations of uroporphyrinogen III at position C-2 and C-7 to form precorrin-2 via precorrin-1. Then it catalyzes the NAD-dependent ring dehydrogenation of precorrin-2 to yield sirohydrochlorin. Finally, it catalyzes the ferrochelation of sirohydrochlorin to yield siroheme. The chain is Siroheme synthase from Nitrosococcus oceani (strain ATCC 19707 / BCRC 17464 / JCM 30415 / NCIMB 11848 / C-107).